The primary structure comprises 288 residues: Extracellular ribonuclease (288 aa).

The first 26 residues, 1–26 (MTKKAWFLPLVCVLLISGWLAPAASA), serve as a signal peptide directing secretion.

The protein localises to the secreted. Mg(2+)-activated ribonuclease which hydrolyzes RNA apparently nonspecifically into oligonucleotides with 5'-terminal phosphate. This is Extracellular ribonuclease (bsn) from Bacillus subtilis (strain 168).